The following is a 248-amino-acid chain: ATP synthase subunit a (248 aa).

The propeptide at 1–3 (MLY) is removed in mature form. Transmembrane regions (helical) follow at residues 24–44 (MSLTNSSLYFIIAAIISFFIF), 86–106 (IYMPLIFSLFIIILVSNLVGL), 117–137 (FALPLGLSVTIIISVTVIGFV), 146–166 (VLLPSGTPLGLVPLLLVVELL), 183–203 (ITSGHILLNIISGFLFKTSGI), 205–225 (LLFVIIPFTLFIALTGLELIV), and 227–247 (ILQAYVWSILTCIYIKDSLIL).

It belongs to the ATPase A chain family. F-type ATPases have 2 components, CF(1) - the catalytic core - and CF(0) - the membrane proton channel. CF(1) has five subunits: alpha(3), beta(3), gamma(1), delta(1), epsilon(1). CF(0) has three main subunits: a, b and c.

The protein resides in the mitochondrion inner membrane. In terms of biological role, mitochondrial membrane ATP synthase (F(1)F(0) ATP synthase or Complex V) produces ATP from ADP in the presence of a proton gradient across the membrane which is generated by electron transport complexes of the respiratory chain. F-type ATPases consist of two structural domains, F(1) - containing the extramembraneous catalytic core and F(0) - containing the membrane proton channel, linked together by a central stalk and a peripheral stalk. During catalysis, ATP synthesis in the catalytic domain of F(1) is coupled via a rotary mechanism of the central stalk subunits to proton translocation. Key component of the proton channel; it may play a direct role in the translocation of protons across the membrane. This Zancudomyces culisetae (Gut fungus) protein is ATP synthase subunit a.